The primary structure comprises 129 residues: Glycophorin-A (129 aa).

Residues 1–17 (MYEKIVIVLLLSGYIST) form the signal peptide. At glutamine 18 the chain carries Pyrrolidone carboxylic acid. Residues 18 to 82 (QDVTEIIPHE…QLVHIFSEPV (65 aa)) lie on the Extracellular side of the membrane. O-linked (GalNAc...) serine glycosylation is found at serine 29 and serine 30. Threonine 34 carries an O-linked (GalNAc...) threonine glycan. Serine 40 carries O-linked (GalNAc...) serine glycosylation. O-linked (GalNAc...) threonine glycosylation is found at threonine 41 and threonine 48. O-linked (GalNAc...) serine glycosylation occurs at serine 56. The helical transmembrane segment at 83 to 103 (IIGIIYAVMLGIIITILSIAF) threads the bilayer. The Cytoplasmic segment spans residues 104–129 (CIGQLTKKSSLPAQVASPEDVDPEVL).

The protein belongs to the glycophorin-A family. In terms of assembly, homodimer. Component of the ankyrin-1 complex in the erythrocyte, composed of ANK1, RHCE, RHAG, SLC4A1, EPB42, GYPA, GYPB and AQP1. Interacts with SLC4A1; a GYPA monomer is bound at each end of the SLC4A1 dimer forming a heterotetramer.

It is found in the membrane. Its function is as follows. Component of the ankyrin-1 complex, a multiprotein complex involved in the stability and shape of the erythrocyte membrane. Glycophorin A is the major intrinsic membrane protein of the erythrocyte. The N-terminal glycosylated segment, which lies outside the erythrocyte membrane, has MN blood group receptors. Appears to be important for the function of SLC4A1 and is required for high activity of SLC4A1. May be involved in translocation of SLC4A1 to the plasma membrane. In Canis lupus familiaris (Dog), this protein is Glycophorin-A.